Consider the following 156-residue polypeptide: Regulatory protein RecX (156 aa).

Belongs to the RecX family.

It is found in the cytoplasm. In terms of biological role, modulates RecA activity. This is Regulatory protein RecX from Pseudomonas putida (strain ATCC 47054 / DSM 6125 / CFBP 8728 / NCIMB 11950 / KT2440).